Consider the following 36-residue polypeptide: uncharacterized protein (36 aa).

The segment covering 1-14 has biased composition (polar residues); the sequence is MNQLGSGPTKQGVA. The tract at residues 1–36 is disordered; the sequence is MNQLGSGPTKQGVATNTGSTGTTKNNSNLSGKGWVL. Low complexity predominate over residues 15–36; the sequence is TNTGSTGTTKNNSNLSGKGWVL.

This is an uncharacterized protein from Dictyostelium discoideum (Social amoeba).